The primary structure comprises 118 residues: Large ribosomal subunit protein bL20c (118 aa).

This sequence belongs to the bacterial ribosomal protein bL20 family.

The protein resides in the plastid. The protein localises to the chloroplast. Its function is as follows. Binds directly to 23S ribosomal RNA and is necessary for the in vitro assembly process of the 50S ribosomal subunit. It is not involved in the protein synthesizing functions of that subunit. This Adiantum capillus-veneris (Maidenhair fern) protein is Large ribosomal subunit protein bL20c.